A 121-amino-acid polypeptide reads, in one-letter code: Large ribosomal subunit protein uL14 (121 aa).

The protein belongs to the universal ribosomal protein uL14 family. Part of the 50S ribosomal subunit. Forms a cluster with proteins L3 and L19. In the 70S ribosome, L14 and L19 interact and together make contacts with the 16S rRNA in bridges B5 and B8.

Functionally, binds to 23S rRNA. Forms part of two intersubunit bridges in the 70S ribosome. In Aquifex aeolicus (strain VF5), this protein is Large ribosomal subunit protein uL14.